The primary structure comprises 448 residues: Gametocyte surface protein P45/48 (448 aa).

Positions M1 to G27 are cleaved as a signal peptide. Residues I45–Y182 enclose the 6-Cys 1 domain. 2 disulfide bridges follow: C49–C71 and C102–C156. N50, N131, N190, N204, N254, N299, and N303 each carry an N-linked (GlcNAc...) asparagine glycan. One can recognise a 6-Cys 2 domain in the interval V294–D426. 3 cysteine pairs are disulfide-bonded: C298–C327, C344–C412, and C352–C410. D426 is lipidated: GPI-anchor amidated aspartate. A propeptide spans S427 to I448 (removed in mature form).

In terms of assembly, heterodimer; heterodimerizes with PF230.

It localises to the cell surface. The protein resides in the cell membrane. Its function is as follows. Gametocyte surface protein required for male fertility. The protein is Gametocyte surface protein P45/48 (PF45/48) of Plasmodium falciparum (isolate 3D7).